The following is a 144-amino-acid chain: Small ribosomal subunit protein eS19 (144 aa).

It belongs to the eukaryotic ribosomal protein eS19 family.

In Argopecten irradians (Bay scallop), this protein is Small ribosomal subunit protein eS19 (RPS19).